Consider the following 167-residue polypeptide: HTH-type transcriptional repressor IacR (167 aa).

The span at 1-10 shows a compositional bias: polar residues; it reads MSNAKNTSAA. A disordered region spans residues 1 to 25; the sequence is MSNAKNTSAASPARKGHSHHDPASD. The HTH marR-type domain maps to 30–162; that stretch reads EDFPFYWLAR…LNRMLEVVFH (133 aa). Residues 76–99 constitute a DNA-binding region (H-T-H motif); that stretch reads ISEISTHAIAKLSTITKIVYRMKE.

Its activity is regulated as follows. Exposure to indole-3-acetic acid (IAA) probably relieves the repressor activity. In terms of biological role, probably acts as a repressor of iacA expression. This is HTH-type transcriptional repressor IacR from Pseudomonas putida (Arthrobacter siderocapsulatus).